Consider the following 502-residue polypeptide: Probable cytosol aminopeptidase (502 aa).

The Mn(2+) site is built by lysine 269 and aspartate 274. Lysine 281 is a catalytic residue. Aspartate 292, aspartate 351, and glutamate 353 together coordinate Mn(2+). The active site involves arginine 355.

The protein belongs to the peptidase M17 family. Requires Mn(2+) as cofactor.

It is found in the cytoplasm. The enzyme catalyses Release of an N-terminal amino acid, Xaa-|-Yaa-, in which Xaa is preferably Leu, but may be other amino acids including Pro although not Arg or Lys, and Yaa may be Pro. Amino acid amides and methyl esters are also readily hydrolyzed, but rates on arylamides are exceedingly low.. It catalyses the reaction Release of an N-terminal amino acid, preferentially leucine, but not glutamic or aspartic acids.. Its function is as follows. Presumably involved in the processing and regular turnover of intracellular proteins. Catalyzes the removal of unsubstituted N-terminal amino acids from various peptides. The polypeptide is Probable cytosol aminopeptidase (Vibrio parahaemolyticus serotype O3:K6 (strain RIMD 2210633)).